The primary structure comprises 423 residues: Protein SOSEKI 5 (423 aa).

The tract at residues 1–33 (MSSRVFRATPDNNYLVPRRSKDQQDTSPDRNRI) is disordered. Residues 19 to 33 (RSKDQQDTSPDRNRI) are compositionally biased toward basic and acidic residues. A DIX-like oligomerization domain region spans residues 45 to 136 (RKVPVVYYLC…YVLKGSEVLD (92 aa)). Disordered stretches follow at residues 150–172 (SSFR…PAVI) and 196–258 (SSAE…SPET). The span at 196 to 211 (SSAESTQRLAADASTQ) shows a compositional bias: polar residues. 2 consecutive short sequence motifs (association to cell membranes) follow at residues 233–234 (AS) and 303–304 (CG). Residues 379–423 (SSSYNADRCSRMGPTTEKDEEEAVRAKCIPRKPKPVAKRNNGGQQ) are disordered. Over residues 406–415 (CIPRKPKPVA) the composition is skewed to basic residues.

This sequence belongs to the SOSEKI family. Homodimer. Forms long polymer filaments with other SOKs proteins polymers (e.g. SOK1, SOK2, SOK3 and SOK4) crucial for polar localization and biological activity. Binds to ANGUSTIFOLIA (AN). In terms of tissue distribution, expressed during embryogenesis and in roots.

It is found in the cell membrane. Its function is as follows. SOSEKI proteins (SOK1-5) locally interpret global polarity cues and can influence cell division orientation to coordinate cell polarization relative to body axes. The sequence is that of Protein SOSEKI 5 from Arabidopsis thaliana (Mouse-ear cress).